Here is a 951-residue protein sequence, read N- to C-terminus: Cation channel sperm-associated auxiliary subunit epsilon (951 aa).

The first 19 residues, 1–19 (MSAREVAVLLLWLSCYGSA), serve as a signal peptide directing secretion. Topologically, residues 20–903 (LWRYSTNSPN…ETFGLIPSPS (884 aa)) are extracellular. Intrachain disulfides connect cysteine 57–cysteine 71, cysteine 101–cysteine 206, cysteine 246–cysteine 336, and cysteine 410–cysteine 413. Asparagine 61 and asparagine 114 each carry an N-linked (GlcNAc...) asparagine glycan. N-linked (GlcNAc...) asparagine glycosylation is found at asparagine 414, asparagine 472, asparagine 487, asparagine 493, and asparagine 535. 4 cysteine pairs are disulfide-bonded: cysteine 583–cysteine 690, cysteine 703–cysteine 885, cysteine 719–cysteine 752, and cysteine 804–cysteine 835. N-linked (GlcNAc...) asparagine glycosylation occurs at asparagine 796. N-linked (GlcNAc...) asparagine glycosylation is found at asparagine 854, asparagine 881, and asparagine 886. The chain crosses the membrane as a helical span at residues 904-924 (VYLVASFLFVLMLLFFTILVL). Over 925–951 (SYFRYMRIYRRYIYEPLHKPQRKRKKN) the chain is Cytoplasmic.

It belongs to the CATSPERD family. As to quaternary structure, component of the CatSper complex or CatSpermasome composed of the core pore-forming members CATSPER1, CATSPER2, CATSPER3 and CATSPER4 as well as auxiliary members CATSPERB, CATSPERG, CATSPERD, CATSPERE, CATSPERZ, C2CD6/CATSPERT, TMEM249, TMEM262 and EFCAB9. HSPA1 may be an additional auxiliary complex member. The core complex members CATSPER1, CATSPER2, CATSPER3 and CATSPER4 form a heterotetrameric channel. The auxiliary CATSPERB, CATSPERG, CATSPERD and CATSPERE subunits form a pavilion-like structure over the pore which stabilizes the complex through interactions with CATSPER4, CATSPER3, CATSPER1 and CATSPER2 respectively. TMEM262/CATSPERH interacts with CATSPERB, further stabilizing the complex. C2CD6/CATSPERT interacts at least with CATSPERD and is required for targeting the CatSper complex in the flagellar membrane.

The protein localises to the cell projection. The protein resides in the cilium. It is found in the flagellum membrane. Functionally, auxiliary component of the CatSper complex, a complex involved in sperm cell hyperactivation. Sperm cell hyperactivation is needed for sperm motility which is essential late in the preparation of sperm for fertilization. This chain is Cation channel sperm-associated auxiliary subunit epsilon, found in Homo sapiens (Human).